The chain runs to 368 residues: Spermidine/putrescine import ATP-binding protein PotA (368 aa).

Positions 8–238 (IELKNVSKIF…PVNLFVARFV (231 aa)) constitute an ABC transporter domain. Residue 40–47 (GPSGCGKT) coordinates ATP.

The protein belongs to the ABC transporter superfamily. Spermidine/putrescine importer (TC 3.A.1.11.1) family. In terms of assembly, the complex is composed of two ATP-binding proteins (PotA), two transmembrane proteins (PotB and PotC) and a solute-binding protein (PotD).

The protein resides in the cell membrane. The catalysed reaction is ATP + H2O + polyamine-[polyamine-binding protein]Side 1 = ADP + phosphate + polyamineSide 2 + [polyamine-binding protein]Side 1.. Part of the ABC transporter complex PotABCD involved in spermidine/putrescine import. Responsible for energy coupling to the transport system. The polypeptide is Spermidine/putrescine import ATP-binding protein PotA (Lawsonia intracellularis (strain PHE/MN1-00)).